A 232-amino-acid polypeptide reads, in one-letter code: Phospholipase A2 hemilipin (232 aa).

An N-terminal signal peptide occupies residues 1 to 18 (MTFLILTILATVTPSLYS). A propeptide spanning residues 19-105 (HVVQRELRVN…QRCSGSAEGR (87 aa)) is cleaved from the precursor. Trp-115, Gly-117, and Gly-119 together coordinate Ca(2+). Cystine bridges form between Cys-116-Cys-137, Cys-136-Cys-175, Cys-143-Cys-168, Cys-166-Cys-206, and Cys-211-Cys-219. An N-linked (GlcNAc...) asparagine glycan is attached at Asn-124. Residue His-140 is part of the active site. Residue Asp-141 coordinates Ca(2+). Asn-157 carries N-linked (GlcNAc...) asparagine glycosylation. Residues 214–217 (KRDA) constitute a propeptide that is removed on maturation.

It belongs to the phospholipase A2 family. Group III subfamily. In terms of assembly, heterodimer composed of a small subunit and a large subunit; disulfid-linked. It depends on Ca(2+) as a cofactor. Expressed by the venom gland.

The protein localises to the secreted. It catalyses the reaction a 1,2-diacyl-sn-glycero-3-phosphocholine + H2O = a 1-acyl-sn-glycero-3-phosphocholine + a fatty acid + H(+). Scorpion venom phospholipase A2 (PLA2) that shows high hydrolytic activities towards lecithin and acts as an effective blocker of all angiogenesis key steps in vivo and in vitro. It has no effect on apoptosis and does not display hemolytic, inflammatory or neurotoxic effects. PLA2 catalyzes the calcium-dependent hydrolysis of the 2-acyl groups in 3-sn-phosphoglycerides. The chain is Phospholipase A2 hemilipin from Hemiscorpius lepturus (Scorpion).